A 142-amino-acid chain; its full sequence is Hemoglobin subunit alpha-C (142 aa).

Residue Ala-2 is modified to N-acetylalanine. Residues 2 to 142 (ALNCDDKAHI…VSGLLTSKYR (141 aa)) form the Globin domain. O2 is bound at residue His-59. His-88 is a heme b binding site.

It belongs to the globin family. In terms of assembly, heterotetramer of either two alpha-B chains or two alpha-C chains and two beta chains. The two major hemoglobins, B and C, associate upon deoxygenation to form a trimer of tetramers, BC2, that has a much lower affinity for oxygen than either component alone. Red blood cells.

Its function is as follows. The alpha-C chain is a component of adult hemoglobin C. The chain is Hemoglobin subunit alpha-C from Aquarana catesbeiana (American bullfrog).